A 479-amino-acid chain; its full sequence is RAC-gamma serine/threonine-protein kinase (479 aa).

Serine 2 is subject to N-acetylserine. In terms of domain architecture, PH spans 5-107 (TIVKEGWVQK…WTEAIQAVAD (103 aa)). A disulfide bridge links cysteine 59 with cysteine 76. The region spanning 148–405 (FDYLKLLGKG…AKEIMRHSFF (258 aa)) is the Protein kinase domain. Residues 154–162 (LGKGTFGKV) and lysine 177 contribute to the ATP site. The Proton acceptor role is filled by aspartate 271. A disulfide bridge links cysteine 293 with cysteine 307. An O-linked (GlcNAc) threonine glycan is attached at threonine 302. A Phosphothreonine; by PDPK1 modification is found at threonine 305. An O-linked (GlcNAc) threonine glycan is attached at threonine 309. One can recognise an AGC-kinase C-terminal domain in the interval 406–479 (SGVNWQDVYD…QFSYSASGRE (74 aa)). The interval 445 to 479 (TITPPEKYDDDGMDGMDNERRPHFPQFSYSASGRE) is disordered. Position 447 is a phosphothreonine (threonine 447). Phosphoserine; by PKC/PRKCZ is present on serine 472. O-linked (GlcNAc) serine; alternate glycosylation occurs at serine 472.

It belongs to the protein kinase superfamily. AGC Ser/Thr protein kinase family. RAC subfamily. As to quaternary structure, interacts (via PH domain) with TCL1A; this enhances AKT3 phosphorylation and activation. Interacts with TRAF6. Interacts with KCTD20. Interacts with BTBD10. Phosphorylation on Thr-305 and Ser-472 is required for full activity. Phosphorylation of the activation loop at Thr-305 by PDPK1/PDK1 is a prerequisite for full activation. Phosphorylation at Ser-472 by mTORC2 in response to growth factors plays a key role in AKT1 activation by facilitating subsequent phosphorylation of the activation loop by PDPK1/PDK1. Post-translationally, ubiquitinated. When fully phosphorylated and translocated into the nucleus, undergoes 'Lys-48'-polyubiquitination catalyzed by TTC3, leading to its degradation by the proteasome. In terms of processing, O-GlcNAcylation at Thr-302 and Thr-309 inhibits activating phosphorylation at Thr-305 via disrupting the interaction between AKT and PDPK1/PDK1. As to expression, isoform 1 is expressed in prostate, testis, uterus and mammary gland and isoform 2 is expressed in prostate, testis and mammary gland.

The protein resides in the nucleus. Its subcellular location is the cytoplasm. The protein localises to the membrane. It carries out the reaction L-seryl-[protein] + ATP = O-phospho-L-seryl-[protein] + ADP + H(+). The enzyme catalyses L-threonyl-[protein] + ATP = O-phospho-L-threonyl-[protein] + ADP + H(+). Its activity is regulated as follows. Two specific sites, one in the kinase domain (Thr-305) and the other in the C-terminal regulatory region (Ser-472), need to be phosphorylated for its full activation. IGF-1 leads to the activation of AKT3, which may play a role in regulating cell survival. Its function is as follows. AKT3 is one of 3 closely related serine/threonine-protein kinases (AKT1, AKT2 and AKT3) called the AKT kinase, and which regulate many processes including metabolism, proliferation, cell survival, growth and angiogenesis. This is mediated through serine and/or threonine phosphorylation of a range of downstream substrates. Over 100 substrate candidates have been reported so far, but for most of them, no isoform specificity has been reported. AKT3 is the least studied AKT isoform. It plays an important role in brain development and is crucial for the viability of malignant glioma cells. AKT3 isoform may also be the key molecule in up-regulation and down-regulation of MMP13 via IL13. Required for the coordination of mitochondrial biogenesis with growth factor-induced increases in cellular energy demands. Down-regulation by RNA interference reduces the expression of the phosphorylated form of BAD, resulting in the induction of caspase-dependent apoptosis. This is RAC-gamma serine/threonine-protein kinase (Akt3) from Mus musculus (Mouse).